Reading from the N-terminus, the 464-residue chain is Protein FAM90A23 (464 aa).

Disordered regions lie at residues 1 to 42 (MMAR…DPRL), 69 to 389 (VPAT…HDGA), and 415 to 437 (HSPEKPGAFLAQSPHVSEKSEAP). Basic and acidic residues-rich tracts occupy residues 74-89 (GKKEGKENLKPWKPRA) and 97-114 (NKDKGEKEERPRQQDPQR). A compositionally biased stretch (low complexity) spans 180–197 (LASLSPLRKASLSSSSSL).

It belongs to the FAM90 family.

The sequence is that of Protein FAM90A23 from Homo sapiens (Human).